Consider the following 396-residue polypeptide: Exodeoxyribonuclease 7 large subunit (396 aa).

It belongs to the XseA family. As to quaternary structure, heterooligomer composed of large and small subunits.

The protein resides in the cytoplasm. It catalyses the reaction Exonucleolytic cleavage in either 5'- to 3'- or 3'- to 5'-direction to yield nucleoside 5'-phosphates.. In terms of biological role, bidirectionally degrades single-stranded DNA into large acid-insoluble oligonucleotides, which are then degraded further into small acid-soluble oligonucleotides. This Clostridium tetani (strain Massachusetts / E88) protein is Exodeoxyribonuclease 7 large subunit.